The primary structure comprises 77 residues: Acyl carrier protein (77 aa).

Residues 2–77 form the Carrier domain; it reads SNIEERVKKI…AAIDYVNSAQ (76 aa). S37 is subject to O-(pantetheine 4'-phosphoryl)serine.

This sequence belongs to the acyl carrier protein (ACP) family. Post-translationally, 4'-phosphopantetheine is transferred from CoA to a specific serine of apo-ACP by AcpS. This modification is essential for activity because fatty acids are bound in thioester linkage to the sulfhydryl of the prosthetic group.

It localises to the cytoplasm. It participates in lipid metabolism; fatty acid biosynthesis. Its function is as follows. Carrier of the growing fatty acid chain in fatty acid biosynthesis. This chain is Acyl carrier protein, found in Vibrio campbellii (strain ATCC BAA-1116).